The following is a 628-amino-acid chain: Phosphomethylpyrimidine synthase (628 aa).

Substrate is bound by residues Asn-225, Met-254, Tyr-283, His-319, Ser-339–Gly-341, Asp-380–Arg-383, and Glu-419. His-423 contributes to the Zn(2+) binding site. Substrate is bound at residue Tyr-446. A Zn(2+)-binding site is contributed by His-487. Cys-567, Cys-570, and Cys-575 together coordinate [4Fe-4S] cluster.

Belongs to the ThiC family. As to quaternary structure, homodimer. [4Fe-4S] cluster is required as a cofactor.

The catalysed reaction is 5-amino-1-(5-phospho-beta-D-ribosyl)imidazole + S-adenosyl-L-methionine = 4-amino-2-methyl-5-(phosphooxymethyl)pyrimidine + CO + 5'-deoxyadenosine + formate + L-methionine + 3 H(+). It functions in the pathway cofactor biosynthesis; thiamine diphosphate biosynthesis. In terms of biological role, catalyzes the synthesis of the hydroxymethylpyrimidine phosphate (HMP-P) moiety of thiamine from aminoimidazole ribotide (AIR) in a radical S-adenosyl-L-methionine (SAM)-dependent reaction. This is Phosphomethylpyrimidine synthase from Leptothrix cholodnii (strain ATCC 51168 / LMG 8142 / SP-6) (Leptothrix discophora (strain SP-6)).